The chain runs to 579 residues: Adenine deaminase (579 aa).

The protein belongs to the metallo-dependent hydrolases superfamily. Adenine deaminase family. Requires Mn(2+) as cofactor.

It carries out the reaction adenine + H2O + H(+) = hypoxanthine + NH4(+). The sequence is that of Adenine deaminase from Listeria welshimeri serovar 6b (strain ATCC 35897 / DSM 20650 / CCUG 15529 / CIP 8149 / NCTC 11857 / SLCC 5334 / V8).